The primary structure comprises 479 residues: UDP-N-acetylmuramate--L-alanine ligase (479 aa).

128–134 (GAHGKTT) provides a ligand contact to ATP.

The protein belongs to the MurCDEF family.

The protein resides in the cytoplasm. The catalysed reaction is UDP-N-acetyl-alpha-D-muramate + L-alanine + ATP = UDP-N-acetyl-alpha-D-muramoyl-L-alanine + ADP + phosphate + H(+). Its pathway is cell wall biogenesis; peptidoglycan biosynthesis. Functionally, cell wall formation. This chain is UDP-N-acetylmuramate--L-alanine ligase, found in Psychrobacter cryohalolentis (strain ATCC BAA-1226 / DSM 17306 / VKM B-2378 / K5).